Here is a 198-residue protein sequence, read N- to C-terminus: Recombination protein RecR (198 aa).

The segment at 57–72 adopts a C4-type zinc-finger fold; that stretch reads CSVCGHITDQDPCYIC. Positions 80–175 constitute a Toprim domain; sequence SVICVVQDPK…KLSRIAHGLP (96 aa).

This sequence belongs to the RecR family.

May play a role in DNA repair. It seems to be involved in an RecBC-independent recombinational process of DNA repair. It may act with RecF and RecO. The sequence is that of Recombination protein RecR from Bacillus subtilis (strain 168).